Reading from the N-terminus, the 24-residue chain is Lectin (24 aa).

The segment covering alanine 1–leucine 18 has biased composition (polar residues). The tract at residues alanine 1–alanine 24 is disordered.

This sequence belongs to the leguminous lectin family. As to quaternary structure, homotetramer.

This is Lectin from Crotalaria juncea (Sunn hemp).